Here is a 178-residue protein sequence, read N- to C-terminus: Large ribosomal subunit protein uL6 (178 aa).

It belongs to the universal ribosomal protein uL6 family. As to quaternary structure, part of the 50S ribosomal subunit.

Its function is as follows. This protein binds to the 23S rRNA, and is important in its secondary structure. It is located near the subunit interface in the base of the L7/L12 stalk, and near the tRNA binding site of the peptidyltransferase center. The sequence is that of Large ribosomal subunit protein uL6 from Campylobacter concisus (strain 13826).